The sequence spans 351 residues: Methionine import ATP-binding protein MetN (351 aa).

Residues 2–241 (IELRNVTKTY…PKTEIAKKFT (240 aa)) enclose the ABC transporter domain. 38–45 (GKSGAGKS) is a binding site for ATP.

Belongs to the ABC transporter superfamily. Methionine importer (TC 3.A.1.24) family. As to quaternary structure, the complex is composed of two ATP-binding proteins (MetN), two transmembrane proteins (MetI) and a solute-binding protein (MetQ).

It is found in the cell inner membrane. The catalysed reaction is L-methionine(out) + ATP + H2O = L-methionine(in) + ADP + phosphate + H(+). The enzyme catalyses D-methionine(out) + ATP + H2O = D-methionine(in) + ADP + phosphate + H(+). In terms of biological role, part of the ABC transporter complex MetNIQ involved in methionine import. Responsible for energy coupling to the transport system. The chain is Methionine import ATP-binding protein MetN from Coxiella burnetii (strain RSA 493 / Nine Mile phase I).